Reading from the N-terminus, the 500-residue chain is Glucose-6-phosphate 1-dehydrogenase (500 aa).

NADP(+) contacts are provided by residues 18 to 25 (GASGDLSK), Arg52, and Lys155. D-glucose 6-phosphate-binding positions include Lys155, 185-189 (HYLGK), Glu223, and Asp242. The Proton acceptor role is filled by His247. Residue Lys338 coordinates NADP(+). Lys341 contributes to the D-glucose 6-phosphate binding site. NADP(+) is bound by residues Lys347, Arg351, and Arg373. Gln375 contacts D-glucose 6-phosphate. NADP(+) contacts are provided by residues 381 to 383 (YFK), 401 to 403 (DLT), and Tyr483.

This sequence belongs to the glucose-6-phosphate dehydrogenase family.

The protein resides in the cytoplasm. Its subcellular location is the cytosol. The enzyme catalyses D-glucose 6-phosphate + NADP(+) = 6-phospho-D-glucono-1,5-lactone + NADPH + H(+). Its pathway is carbohydrate degradation; pentose phosphate pathway; D-ribulose 5-phosphate from D-glucose 6-phosphate (oxidative stage): step 1/3. Its function is as follows. Catalyzes the rate-limiting step of the oxidative pentose-phosphate pathway, which represents a route for the dissimilation of carbohydrates besides glycolysis. The main function of this enzyme is to provide reducing power (NADPH) and pentose phosphates for fatty acid and nucleic acid synthesis. The protein is Glucose-6-phosphate 1-dehydrogenase of Schizosaccharomyces pombe (strain 972 / ATCC 24843) (Fission yeast).